A 66-amino-acid polypeptide reads, in one-letter code: Muscarinic toxin 1 (66 aa).

4 disulfides stabilise this stretch: Cys3/Cys24, Cys17/Cys42, Cys46/Cys58, and Cys59/Cys64.

This sequence belongs to the three-finger toxin family. Short-chain subfamily. Aminergic toxin sub-subfamily. As to expression, expressed by the venom gland.

Its subcellular location is the secreted. Its function is as follows. Shows a non-competitive interaction with adrenergic and muscarinic receptors. Binds to alpha-2b (ADRA2B) (IC(50)=2.3 nM), alpha-1a (ADRA1A), alpha-1b (ADRA1B), and alpha-2c (ADRA2C) adrenergic receptors. Reversibly binds to M1 (CHRM1) muscarinic acetylcholine receptors, probably by interacting with the orthosteric site. Also reveals a slightly weaker effect at M3 (CHRM3) and M4 (CHRM4) receptors. The order of potency is ADRA2B&gt;&gt;CHRM1&gt;ADRA1A&gt;ADRA1B&gt;ADRA2C/CHRM4. This is Muscarinic toxin 1 from Dendroaspis angusticeps (Eastern green mamba).